Here is a 227-residue protein sequence, read N- to C-terminus: ATP-dependent dethiobiotin synthetase BioD (227 aa).

12–17 (DVGKTV) is a binding site for ATP. Residue threonine 16 participates in Mg(2+) binding. Lysine 37 is an active-site residue. Threonine 41 provides a ligand contact to substrate. Residues aspartate 50, 110–113 (EGAG), 171–172 (GS), and 201–203 (PAG) each bind ATP. Aspartate 50 and glutamate 110 together coordinate Mg(2+).

The protein belongs to the dethiobiotin synthetase family. As to quaternary structure, homodimer. It depends on Mg(2+) as a cofactor.

The protein localises to the cytoplasm. It carries out the reaction (7R,8S)-7,8-diammoniononanoate + CO2 + ATP = (4R,5S)-dethiobiotin + ADP + phosphate + 3 H(+). Its pathway is cofactor biosynthesis; biotin biosynthesis; biotin from 7,8-diaminononanoate: step 1/2. Functionally, catalyzes a mechanistically unusual reaction, the ATP-dependent insertion of CO2 between the N7 and N8 nitrogen atoms of 7,8-diaminopelargonic acid (DAPA, also called 7,8-diammoniononanoate) to form a ureido ring. This Rhodococcus erythropolis (strain PR4 / NBRC 100887) protein is ATP-dependent dethiobiotin synthetase BioD.